A 210-amino-acid polypeptide reads, in one-letter code: HTH-type transcriptional repressor FabR (210 aa).

The HTH tetR-type domain occupies 10–70; the sequence is KTRRSLVEAA…TMVDESGLML (61 aa). The segment at residues 33-52 is a DNA-binding region (H-T-H motif); it reads SLREVAREAGIAPTSFYRHF.

Homodimer.

Its subcellular location is the cytoplasm. Functionally, represses the transcription of fabB, involved in unsaturated fatty acid (UFA) biosynthesis. By controlling UFA production, FabR directly influences the physical properties of the membrane bilayer. In Salmonella choleraesuis (strain SC-B67), this protein is HTH-type transcriptional repressor FabR.